The sequence spans 158 residues: Urease accessory protein UreE (158 aa).

The protein belongs to the UreE family.

It is found in the cytoplasm. Functionally, involved in urease metallocenter assembly. Binds nickel. Probably functions as a nickel donor during metallocenter assembly. The sequence is that of Urease accessory protein UreE from Klebsiella pneumoniae subsp. pneumoniae (strain ATCC 700721 / MGH 78578).